The sequence spans 644 residues: N-acetylgalactosaminyltransferase 4 (644 aa).

Topologically, residues 1-13 (MAIKKRYVKRLLR) are cytoplasmic. The chain crosses the membrane as a helical; Signal-anchor for type II membrane protein span at residues 14 to 34 (KVVLLLVVIVTVSLVTTLVVE). Topologically, residues 35–644 (RRMKNAAELT…MLDTFYDGLK (610 aa)) are lumenal. Asn-157 and Asn-179 each carry an N-linked (GlcNAc...) asparagine glycan. Residues 177-288 (LPNISVIFIF…YNWLPPLIEP (112 aa)) form a catalytic subdomain A region. The substrate site is built by Asp-218 and Arg-249. Asp-272 is a binding site for Mn(2+). Ser-273 serves as a coordination point for substrate. His-274 is a Mn(2+) binding site. A catalytic subdomain B region spans residues 345 to 407 (PYRSPVMMGG…PCSRVAHIFR (63 aa)). Residue Trp-376 participates in substrate binding. Residue His-404 participates in Mn(2+) binding. Arg-407 is a binding site for substrate. Positions 496 to 629 (AAGIIQNVAN…GNDRQRWEFG (134 aa)) constitute a Ricin B-type lectin domain. Cys-509 and Cys-526 are oxidised to a cystine. Asn-529 and Asn-565 each carry an N-linked (GlcNAc...) asparagine glycan. Disulfide bonds link Cys-556-Cys-573 and Cys-600-Cys-617. Asn-632 is a glycosylation site (N-linked (GlcNAc...) asparagine).

The protein belongs to the glycosyltransferase 2 family. GalNAc-T subfamily. It depends on Mn(2+) as a cofactor. Expressed in developing oocytes and egg chambers. During embryonic stages 9-11, expressed in the primordium of the foregut, midgut and hindgut. During embryonic stages 12-13, shows specific expression in the proventriculus that continues until the end of embryogenesis. In third instar larvae, ubiquitously expressed in wing, eye-antennal, leg and haltere imaginal disks.

The protein resides in the golgi apparatus membrane. It carries out the reaction L-seryl-[protein] + UDP-N-acetyl-alpha-D-galactosamine = a 3-O-[N-acetyl-alpha-D-galactosaminyl]-L-seryl-[protein] + UDP + H(+). The catalysed reaction is L-threonyl-[protein] + UDP-N-acetyl-alpha-D-galactosamine = a 3-O-[N-acetyl-alpha-D-galactosaminyl]-L-threonyl-[protein] + UDP + H(+). It functions in the pathway protein modification; protein glycosylation. Glycopeptide transferase involved in O-linked oligosaccharide biosynthesis, which catalyzes the transfer of an N-acetyl-D-galactosamine residue to an already glycosylated peptide. In contrast to other proteins of the family, it does not act as a peptide transferase that transfers GalNAc onto serine or threonine residue on the protein receptor, but instead requires the prior addition of a GalNAc on a peptide before adding additional GalNAc moieties. Some peptide transferase activity is however not excluded, considering that its appropriate peptide substrate may remain unidentified. Prefers the diglycosylated Muc5AC-3/13 as substrate. The polypeptide is N-acetylgalactosaminyltransferase 4 (Drosophila melanogaster (Fruit fly)).